Here is a 1511-residue protein sequence, read N- to C-terminus: ATP-dependent permease PDR12 (1511 aa).

Positions 1 to 21 (MSSTDEHIEKDISSRSNHDDD) are enriched in basic and acidic residues. The segment at 1–37 (MSSTDEHIEKDISSRSNHDDDYANSVQSYAASEGQVD) is disordered. At Ser2 the chain carries N-acetylserine. Residues 2–508 (SSTDEHIEKD…RGFQRVKGDS (507 aa)) are Cytoplasmic-facing. A phosphoserine mark is found at Ser32, Ser52, and Ser56. Positions 144–397 (IPAHLISKFT…FQRMGWVKPN (254 aa)) constitute an ABC transporter 1 domain. Lys426 is covalently cross-linked (Glycyl lysine isopeptide (Lys-Gly) (interchain with G-Cter in ubiquitin)). A helical transmembrane segment spans residues 509–529 (TYTKVYLSSFLIKALIIGSMF). Over 530–548 (HKIDDKSQSTTAGAYSRGG) the chain is Extracellular. A helical transmembrane segment spans residues 549-569 (MLFYVLLFASVTSLAEIGNSF). Residues 570-597 (SSRPVIVKHKSYSMYHLSAESLQEIITE) are Cytoplasmic-facing. A helical transmembrane segment spans residues 598-618 (FPTKFVAIVILCLITYWIPFM). Residues 619–622 (KYEA) lie on the Extracellular side of the membrane. Residues 623 to 643 (GAFFQYILYLLTVQQCTSFIF) form a helical membrane-spanning segment. The Cytoplasmic portion of the chain corresponds to 644–657 (KFVATMSKSGVDAH). The chain crosses the membrane as a helical span at residues 658–678 (AVGGLWVLMLCVYAGFVLPIG). The Extracellular portion of the chain corresponds to 679 to 765 (EMHHWIRWLH…FAYKHAWRNW (87 aa)). Residues 766–786 (GVNIVWTFGYIVFNVILSEYL) form a helical membrane-spanning segment. Over 787-1182 (KPVEGGGDLL…WRSPVYIRAK (396 aa)) the chain is Cytoplasmic. One can recognise an ABC transporter 2 domain in the interval 836-1084 (IAEKDVFTWN…TLLKYFERQS (249 aa)). ATP is bound by residues 878-885 (GESGAGKT) and 972-979 (AEALVGKT). A helical transmembrane segment spans residues 1183–1203 (FFECVACALFVGLSYVGVNHS). Position 1204 (Val1204) is a topological domain, extracellular. A helical transmembrane segment spans residues 1205 to 1225 (GGAIEAFSSIFMLLLIALAMI). Over 1226–1254 (NQLHVFAYDSRELYEVREAASNTFHWSVL) the chain is Cytoplasmic. A helical transmembrane segment spans residues 1255–1275 (LLCHAAVENFWSTLCQFMCFI). Residues 1276–1291 (CYYWPAQFSGRASHAG) are Extracellular-facing. A helical transmembrane segment spans residues 1292–1312 (FFFFFYVLIFPLYFVTYGLWI). The Cytoplasmic portion of the chain corresponds to 1313 to 1318 (LYMSPD). Residues 1319-1339 (VPSASMINSNLFAAMLLFCGI) form a helical membrane-spanning segment. Topologically, residues 1340–1444 (LQPREKMPAF…NVKWDHRWRN (105 aa)) are extracellular. Asn1405 carries an N-linked (GlcNAc...) asparagine glycan. The chain crosses the membrane as a helical span at residues 1445–1465 (FGFMWAYICFNIAAMLICYYV). Residues 1466-1511 (VRVKVWSLKSVLNFKKWFNGPRKERHEKDTNIFQTVPGDENKITKK) are Cytoplasmic-facing.

Belongs to the ABC transporter superfamily. ABCG family. PDR (TC 3.A.1.205) subfamily.

The protein localises to the cell membrane. In terms of biological role, plasma membrane transporter which mediates resistance to water-soluble, monocarboxylic acids with chain lengths of from C1 to C7 by active extrusion of the preservative anions from the cytosol. Also involved in the export of aromatic and branched-chain organic acids produced in amino acid catabolism. This Saccharomyces cerevisiae (strain ATCC 204508 / S288c) (Baker's yeast) protein is ATP-dependent permease PDR12 (PDR12).